The sequence spans 483 residues: NAD-dependent protein deacetylase SRT1 (483 aa).

Positions 27–270 constitute a Deacetylase sirtuin-type domain; sequence PELLHKKIEE…MYMMNLRIPP (244 aa). Residues 53–57, 63–65, and 114–117 each bind NAD(+); these read AGIST, DFR, and QNVD. The active-site Proton acceptor is the histidine 134. Residues cysteine 142, cysteine 145, cysteine 167, and cysteine 172 each contribute to the Zn(2+) site. NAD(+) is bound by residues 209-211 and 235-237; these read GTS and NLQ.

It belongs to the sirtuin family. Class IV subfamily. Zn(2+) is required as a cofactor.

The protein resides in the nucleus. It carries out the reaction N(6)-acetyl-L-lysyl-[protein] + NAD(+) + H2O = 2''-O-acetyl-ADP-D-ribose + nicotinamide + L-lysyl-[protein]. Its function is as follows. NAD-dependent protein deacetylase. Has deacetylase activity towards H3K9Ac. May have a function in the safeguard against genome instability and DNA damage to ensure plant cell growth. May negatively regulate metabolic signal transduction involving methanol and jasmonates during leaf senescence. Required for histone H3K9Ac deacetylation and repression of AP2-1/RSR1 and amylase genes during early seed development. Functions as an epigenetic regulator to repress the expression of glycolytic genes and glycolysis in seedlings. Reduces lysine acetylation of the glycolytic glyceraldehyde-3-phosphate dehydrogenase (GAPDH), which is found to also function as an activator of glycolytic gene expression. The sequence is that of NAD-dependent protein deacetylase SRT1 from Oryza sativa subsp. indica (Rice).